A 335-amino-acid chain; its full sequence is Phospho-N-acetylmuramoyl-pentapeptide-transferase (335 aa).

Transmembrane regions (helical) follow at residues 5 to 25, 50 to 70, 78 to 98, 114 to 133, 145 to 165, 177 to 197, 200 to 220, 236 to 256, 262 to 282, and 311 to 331; these read IFLA…LMIP, TPTM…LIMA, MVMV…DDFI, LIGQ…RYLG, IHLE…VGIT, LAAG…TLAA, GGGV…AAAV, VFMG…LAVL, ILLI…LQVF, and VVMV…IAYM.

It belongs to the glycosyltransferase 4 family. MraY subfamily. It depends on Mg(2+) as a cofactor.

The protein resides in the cell membrane. The catalysed reaction is UDP-N-acetyl-alpha-D-muramoyl-L-alanyl-gamma-D-glutamyl-meso-2,6-diaminopimeloyl-D-alanyl-D-alanine + di-trans,octa-cis-undecaprenyl phosphate = di-trans,octa-cis-undecaprenyl diphospho-N-acetyl-alpha-D-muramoyl-L-alanyl-D-glutamyl-meso-2,6-diaminopimeloyl-D-alanyl-D-alanine + UMP. The protein operates within cell wall biogenesis; peptidoglycan biosynthesis. In terms of biological role, catalyzes the initial step of the lipid cycle reactions in the biosynthesis of the cell wall peptidoglycan: transfers peptidoglycan precursor phospho-MurNAc-pentapeptide from UDP-MurNAc-pentapeptide onto the lipid carrier undecaprenyl phosphate, yielding undecaprenyl-pyrophosphoryl-MurNAc-pentapeptide, known as lipid I. The chain is Phospho-N-acetylmuramoyl-pentapeptide-transferase from Desulfitobacterium hafniense (strain DSM 10664 / DCB-2).